A 528-amino-acid chain; its full sequence is 2-isopropylmalate synthase (528 aa).

The Pyruvate carboxyltransferase domain maps to 12 to 279; the sequence is IRIFDTTLRD…DSSINTPRIV (268 aa). Aspartate 21, histidine 214, histidine 216, and asparagine 250 together coordinate Mn(2+). A regulatory domain region spans residues 401–528; that stretch reads RLASMTISDV…STDVPTPATA (128 aa).

It belongs to the alpha-IPM synthase/homocitrate synthase family. LeuA type 1 subfamily. Homodimer. The cofactor is Mn(2+).

The protein resides in the cytoplasm. The enzyme catalyses 3-methyl-2-oxobutanoate + acetyl-CoA + H2O = (2S)-2-isopropylmalate + CoA + H(+). The protein operates within amino-acid biosynthesis; L-leucine biosynthesis; L-leucine from 3-methyl-2-oxobutanoate: step 1/4. Functionally, catalyzes the condensation of the acetyl group of acetyl-CoA with 3-methyl-2-oxobutanoate (2-ketoisovalerate) to form 3-carboxy-3-hydroxy-4-methylpentanoate (2-isopropylmalate). This Stenotrophomonas maltophilia (strain K279a) protein is 2-isopropylmalate synthase.